The primary structure comprises 1774 residues: U3 small nucleolar RNA-associated protein 10 (1774 aa).

Residues 1206–1226 (YDKHSSAGSNDEEAGSESEAE) form a disordered region. The span at 1215–1226 (NDEEAGSESEAE) shows a compositional bias: acidic residues. Residues 1734-1772 (LVPIIAELLEDEDEEVEYEVRSGLVKVVESVMGEPFDRY) form an HEAT repeat.

This sequence belongs to the HEATR1/UTP10 family. As to quaternary structure, component of the ribosomal small subunit (SSU) processome.

It localises to the nucleus. It is found in the nucleolus. Functionally, involved in nucleolar processing of pre-18S ribosomal RNA. Involved in ribosome biosynthesis. The sequence is that of U3 small nucleolar RNA-associated protein 10 from Kluyveromyces lactis (strain ATCC 8585 / CBS 2359 / DSM 70799 / NBRC 1267 / NRRL Y-1140 / WM37) (Yeast).